The sequence spans 445 residues: Tubby-like F-box protein 8 (445 aa).

Residues 56–102 (ESRWASLPPELLRDVIRRLEASESTWPSRKDVVSCAAVCKAWREMCK) form the F-box domain.

It belongs to the TUB family. Ubiquitous.

The chain is Tubby-like F-box protein 8 (TULP8) from Oryza sativa subsp. japonica (Rice).